A 2149-amino-acid polypeptide reads, in one-letter code: Non-reducing polyketide synthase PvBS090_009107 (2149 aa).

The tract at residues tyrosine 8–histidine 244 is N-terminal acylcarrier protein transacylase domain (SAT). In terms of domain architecture, Ketosynthase family 3 (KS3) spans glutamine 375–aspartate 806. Catalysis depends on for beta-ketoacyl synthase activity residues cysteine 547, histidine 682, and histidine 724. Residues phenylalanine 911–aspartate 1231 form a malonyl-CoA:ACP transacylase (MAT) domain region. Serine 1000 serves as the catalytic For acyl/malonyl transferase activity. The tract at residues threonine 1290 to proline 1604 is product template (PT) domain. Residues glutamine 1294–leucine 1426 form an N-terminal hotdog fold region. The PKS/mFAS DH domain occupies glutamine 1294–asparagine 1599. Histidine 1326 serves as the catalytic Proton acceptor; for dehydratase activity. The interval serine 1454 to asparagine 1599 is C-terminal hotdog fold. Aspartate 1512 (proton donor; for dehydratase activity) is an active-site residue. Positions proline 1604 to serine 1631 are disordered. The Carrier 1 domain occupies serine 1649–serine 1726. Serine 1686 bears the O-(pantetheine 4'-phosphoryl)serine mark. Composition is skewed to low complexity over residues leucine 1722–serine 1731 and serine 1744–proline 1755. The tract at residues leucine 1722–glycine 1763 is disordered. The Carrier 2 domain occupies valine 1769–proline 1846. Residue serine 1806 is modified to O-(pantetheine 4'-phosphoryl)serine. A thioesterase (TE) domain region spans residues serine 1875–methionine 2147. Serine 1965 functions as the For thioesterase activity in the catalytic mechanism.

The catalysed reaction is 6 malonyl-CoA + acetyl-CoA + 6 H(+) = naphtopyrone YWA1 + 6 CO2 + 7 CoA + H2O. It participates in secondary metabolite biosynthesis. It functions in the pathway pigment biosynthesis. Functionally, non-reducing polyketide synthase; part of the gene cluster 24 that mediates the biosynthesis of a pigment with an aromatic structure protecting the pigmented fungus from both ionizing and non-ionizing radiations based on a mechanism similar to melanin, that is, free radical quenching and spherical spatial arrangement. Catalyzes the biosynthesis of the gamma-naphthopyrone precursor YWA1, via condensation of one acetyl-CoA starter unit with 6 malonyl-CoA units. YWA1 is probably further processed by the additional enzymes present within the cluster 24, however these additional steps have not been characterized yet. YWA1 is not converted to DHN-melanin in Byssochlamys spectabilis since the use of the DHN-melanin pathway inhibitor pyroquilon does not result in a loss of pigmentation. This Byssochlamys spectabilis (Paecilomyces variotii) protein is Non-reducing polyketide synthase PvBS090_009107.